Here is a 204-residue protein sequence, read N- to C-terminus: uncharacterized protein (204 aa).

Residues 1 to 20 (MQNPLPEVMSPEHDKRTTTP) form a disordered region.

This is an uncharacterized protein from Frog virus 3 (isolate Goorha) (FV-3).